We begin with the raw amino-acid sequence, 235 residues long: MAATTCFFFLFPFLLLLTLSRAATFEIVNRCSYTVWAAASKGDAALDAGGRQLNSGESWTINVEPGTNGGKIWARTDCYFDDSGSGICKTGDCGGLLRCKRFGRPPTTLAEFSLNQYGKDYIDISNIKGFNVPMDFSPTTRGCRGVRCAADIVGQCPAKLKAPGGGCNDACTVFQTSEYCCTTGKCGPTEYSRFFKRLCPDAFSYVLDKPTTVTCPGSSNYRVTFCPTALELEDE.

Positions 1–22 (MAATTCFFFLFPFLLLLTLSRA) are cleaved as a signal peptide. 8 disulfides stabilise this stretch: C31–C226, C78–C88, C93–C99, C143–C215, C148–C199, C156–C167, C171–C180, and C181–C186. Positions 230-235 (LELEDE) are cleaved as a propeptide — removed in mature form.

It belongs to the thaumatin family.

The protein localises to the cytoplasmic vesicle. Taste-modifying protein; intensely sweet-tasting. It is 100000 times sweeter than sucrose on a molar basis. This chain is Thaumatin I, found in Thaumatococcus daniellii (Katemfe).